A 414-amino-acid chain; its full sequence is 3-oxoacyl-[acyl-carrier-protein] synthase 2 (414 aa).

Residues 4 to 411 enclose the Ketosynthase family 3 (KS3) domain; sequence NKRVVITGMG…GHNAVLVFKK (408 aa). Active-site for beta-ketoacyl synthase activity residues include cysteine 165, histidine 304, and histidine 341.

Belongs to the thiolase-like superfamily. Beta-ketoacyl-ACP synthases family.

It catalyses the reaction a fatty acyl-[ACP] + malonyl-[ACP] + H(+) = a 3-oxoacyl-[ACP] + holo-[ACP] + CO2. It carries out the reaction (9Z)-hexadecenoyl-[ACP] + malonyl-[ACP] + H(+) = 3-oxo-(11Z)-octadecenoyl-[ACP] + holo-[ACP] + CO2. Its pathway is lipid metabolism; fatty acid biosynthesis. Its function is as follows. Involved in the type II fatty acid elongation cycle. Catalyzes the elongation of a wide range of acyl-ACP by the addition of two carbons from malonyl-ACP to an acyl acceptor. Can efficiently catalyze the conversion of palmitoleoyl-ACP (cis-hexadec-9-enoyl-ACP) to cis-vaccenoyl-ACP (cis-octadec-11-enoyl-ACP), an essential step in the thermal regulation of fatty acid composition. This Staphylococcus aureus (strain MW2) protein is 3-oxoacyl-[acyl-carrier-protein] synthase 2 (fabF).